Here is a 396-residue protein sequence, read N- to C-terminus: Lipid-A-disaccharide synthase (396 aa).

This sequence belongs to the LpxB family.

The enzyme catalyses a lipid X + a UDP-2-N,3-O-bis[(3R)-3-hydroxyacyl]-alpha-D-glucosamine = a lipid A disaccharide + UDP + H(+). It functions in the pathway bacterial outer membrane biogenesis; LPS lipid A biosynthesis. Its function is as follows. Condensation of UDP-2,3-diacylglucosamine and 2,3-diacylglucosamine-1-phosphate to form lipid A disaccharide, a precursor of lipid A, a phosphorylated glycolipid that anchors the lipopolysaccharide to the outer membrane of the cell. This is Lipid-A-disaccharide synthase from Rhodopseudomonas palustris (strain BisB18).